Reading from the N-terminus, the 261-residue chain is tRNA pseudouridine synthase A (261 aa).

The Nucleophile role is filled by aspartate 51. Position 109 (tyrosine 109) interacts with substrate.

Belongs to the tRNA pseudouridine synthase TruA family. In terms of assembly, homodimer.

It catalyses the reaction uridine(38/39/40) in tRNA = pseudouridine(38/39/40) in tRNA. Functionally, formation of pseudouridine at positions 38, 39 and 40 in the anticodon stem and loop of transfer RNAs. The protein is tRNA pseudouridine synthase A of Shewanella loihica (strain ATCC BAA-1088 / PV-4).